The following is a 267-amino-acid chain: Small ribosomal subunit protein uS2 (267 aa).

Residues 226 to 267 (AAAPNSASVREEEFSAESADEGKGRRAPAKKGEKKADAPAAE) are disordered. Positions 245–267 (DEGKGRRAPAKKGEKKADAPAAE) are enriched in basic and acidic residues.

It belongs to the universal ribosomal protein uS2 family.

This is Small ribosomal subunit protein uS2 from Xanthomonas oryzae pv. oryzae (strain MAFF 311018).